The chain runs to 421 residues: Gamma-glutamyl phosphate reductase (421 aa).

Belongs to the gamma-glutamyl phosphate reductase family.

It is found in the cytoplasm. The enzyme catalyses L-glutamate 5-semialdehyde + phosphate + NADP(+) = L-glutamyl 5-phosphate + NADPH + H(+). It functions in the pathway amino-acid biosynthesis; L-proline biosynthesis; L-glutamate 5-semialdehyde from L-glutamate: step 2/2. Catalyzes the NADPH-dependent reduction of L-glutamate 5-phosphate into L-glutamate 5-semialdehyde and phosphate. The product spontaneously undergoes cyclization to form 1-pyrroline-5-carboxylate. The polypeptide is Gamma-glutamyl phosphate reductase (Pseudomonas aeruginosa (strain UCBPP-PA14)).